A 171-amino-acid polypeptide reads, in one-letter code: Co-chaperone protein HscB homolog (171 aa).

The J domain maps to 2-74 (NHFELFGLPS…ISRAEYILAE (73 aa)).

It belongs to the HscB family. As to quaternary structure, interacts with HscA and stimulates its ATPase activity.

Functionally, co-chaperone involved in the maturation of iron-sulfur cluster-containing proteins. Seems to help targeting proteins to be folded toward HscA. This chain is Co-chaperone protein HscB homolog, found in Vibrio campbellii (strain ATCC BAA-1116).